Reading from the N-terminus, the 90-residue chain is MSRTIFCTFLQRDAEGQDFQLYPGDLGKRIYNEISKEAWAQWQTKQTMLINEKKLSMMNVDDRKLLEQEMIKFLFEGKDVHIEGYTPPSH.

This sequence belongs to the Fe(2+)-trafficking protein family. As to quaternary structure, monomer.

Could be a mediator in iron transactions between iron acquisition and iron-requiring processes, such as synthesis and/or repair of Fe-S clusters in biosynthetic enzymes. The protein is Probable Fe(2+)-trafficking protein of Pectobacterium carotovorum subsp. carotovorum (strain PC1).